Consider the following 240-residue polypeptide: Anti-H(O) lectin (240 aa).

An N-linked (GlcNAc...) asparagine glycan is attached at Asn4. Mn(2+)-binding residues include Glu124 and Asp126. Positions 126, 128, 130, and 133 each coordinate Ca(2+). Asp133 and His141 together coordinate Mn(2+).

The protein belongs to the leguminous lectin family.

Functionally, L-fucose specific lectin. The sequence is that of Anti-H(O) lectin from Lotus tetragonolobus (Winged pea).